We begin with the raw amino-acid sequence, 120 residues long: NAD(P)H-quinone oxidoreductase subunit 3, chloroplastic (120 aa).

The next 3 membrane-spanning stretches (helical) occupy residues 9–29 (FFWA…FISG), 64–84 (MFAL…PWAM), and 88–108 (VLGV…IIGL).

The protein belongs to the complex I subunit 3 family. As to quaternary structure, NDH is composed of at least 16 different subunits, 5 of which are encoded in the nucleus.

It localises to the plastid. The protein resides in the chloroplast thylakoid membrane. It catalyses the reaction a plastoquinone + NADH + (n+1) H(+)(in) = a plastoquinol + NAD(+) + n H(+)(out). It carries out the reaction a plastoquinone + NADPH + (n+1) H(+)(in) = a plastoquinol + NADP(+) + n H(+)(out). In terms of biological role, NDH shuttles electrons from NAD(P)H:plastoquinone, via FMN and iron-sulfur (Fe-S) centers, to quinones in the photosynthetic chain and possibly in a chloroplast respiratory chain. The immediate electron acceptor for the enzyme in this species is believed to be plastoquinone. Couples the redox reaction to proton translocation, and thus conserves the redox energy in a proton gradient. This chain is NAD(P)H-quinone oxidoreductase subunit 3, chloroplastic, found in Atropa belladonna (Belladonna).